Consider the following 346-residue polypeptide: UDP-3-O-acylglucosamine N-acyltransferase (346 aa).

H253 acts as the Proton acceptor in catalysis.

Belongs to the transferase hexapeptide repeat family. LpxD subfamily. As to quaternary structure, homotrimer.

The enzyme catalyses a UDP-3-O-[(3R)-3-hydroxyacyl]-alpha-D-glucosamine + a (3R)-hydroxyacyl-[ACP] = a UDP-2-N,3-O-bis[(3R)-3-hydroxyacyl]-alpha-D-glucosamine + holo-[ACP] + H(+). The protein operates within bacterial outer membrane biogenesis; LPS lipid A biosynthesis. Its function is as follows. Catalyzes the N-acylation of UDP-3-O-acylglucosamine using 3-hydroxyacyl-ACP as the acyl donor. Is involved in the biosynthesis of lipid A, a phosphorylated glycolipid that anchors the lipopolysaccharide to the outer membrane of the cell. In Rickettsia felis (strain ATCC VR-1525 / URRWXCal2) (Rickettsia azadi), this protein is UDP-3-O-acylglucosamine N-acyltransferase.